We begin with the raw amino-acid sequence, 181 residues long: ATP synthase subunit delta (181 aa).

Belongs to the ATPase delta chain family. In terms of assembly, F-type ATPases have 2 components, F(1) - the catalytic core - and F(0) - the membrane proton channel. F(1) has five subunits: alpha(3), beta(3), gamma(1), delta(1), epsilon(1). F(0) has three main subunits: a(1), b(2) and c(10-14). The alpha and beta chains form an alternating ring which encloses part of the gamma chain. F(1) is attached to F(0) by a central stalk formed by the gamma and epsilon chains, while a peripheral stalk is formed by the delta and b chains.

It localises to the cell inner membrane. Functionally, f(1)F(0) ATP synthase produces ATP from ADP in the presence of a proton or sodium gradient. F-type ATPases consist of two structural domains, F(1) containing the extramembraneous catalytic core and F(0) containing the membrane proton channel, linked together by a central stalk and a peripheral stalk. During catalysis, ATP synthesis in the catalytic domain of F(1) is coupled via a rotary mechanism of the central stalk subunits to proton translocation. This protein is part of the stalk that links CF(0) to CF(1). It either transmits conformational changes from CF(0) to CF(1) or is implicated in proton conduction. This Mannheimia succiniciproducens (strain KCTC 0769BP / MBEL55E) protein is ATP synthase subunit delta.